A 547-amino-acid polypeptide reads, in one-letter code: Germacrene A synthase (547 aa).

Residues aspartate 300, aspartate 304, aspartate 443, and glutamate 451 each contribute to the Mg(2+) site. Positions 300–304 match the DDXXD motif motif; sequence DDTYD.

The protein belongs to the terpene synthase family. Tpsa subfamily. Mg(2+) is required as a cofactor. Mn(2+) serves as cofactor. As to expression, expressed in leaves.

The protein localises to the plastid. It localises to the chloroplast. The enzyme catalyses (2E,6E)-farnesyl diphosphate = germacrene A + diphosphate. The catalysed reaction is (2E,6E)-farnesyl diphosphate = (1S,2S,4R)-beta-elemene + diphosphate. Its pathway is secondary metabolite biosynthesis; terpenoid biosynthesis. Its function is as follows. Sesquiterpene synthase involved in the biosynthesis of volatile compounds widely used in aromatherapy and folk medicine, and present in culinary herbs. Mediates the conversion of (2E,6E)-farnesyl diphosphate (FPP) into germacrene A and beta-elemene. Not able to use (2E)-geranyl diphosphate (GPP) as substrate. This chain is Germacrene A synthase, found in Lavandula pedunculata subsp. lusitanica (French lavender).